Consider the following 2542-residue polypeptide: Talin-2 (2542 aa).

One can recognise an FERM domain in the interval 88 to 406 (RPQKIRMLDG…GYIDIILKKK (319 aa)). Residues 312-406 (GVSFFLVKEK…GYIDIILKKK (95 aa)) form an interaction with PIP5K1C region. Serine 428, serine 449, serine 623, and serine 1023 each carry phosphoserine. Phosphotyrosine is present on tyrosine 1665. At threonine 1843 the chain carries Phosphothreonine. The 240-residue stretch at 2294 to 2533 (TEWVDPEDPT…QIRQQQYKFL (240 aa)) folds into the I/LWEQ domain.

As to quaternary structure, interacts directly with PIP5K1C.

The protein localises to the cytoplasm. Its subcellular location is the cell junction. It localises to the focal adhesion. The protein resides in the synapse. It is found in the cell membrane. The protein localises to the cytoskeleton. Its function is as follows. As a major component of focal adhesion plaques that links integrin to the actin cytoskeleton, may play an important role in cell adhesion. Recruits PIP5K1C to focal adhesion plaques and strongly activates its kinase activity. In Homo sapiens (Human), this protein is Talin-2 (TLN2).